The primary structure comprises 171 residues: N5-carboxyaminoimidazole ribonucleotide mutase (171 aa).

Substrate is bound by residues Ser10, Asp13, and Arg40.

It belongs to the AIR carboxylase family. Class I subfamily.

It carries out the reaction 5-carboxyamino-1-(5-phospho-D-ribosyl)imidazole + H(+) = 5-amino-1-(5-phospho-D-ribosyl)imidazole-4-carboxylate. The protein operates within purine metabolism; IMP biosynthesis via de novo pathway; 5-amino-1-(5-phospho-D-ribosyl)imidazole-4-carboxylate from 5-amino-1-(5-phospho-D-ribosyl)imidazole (N5-CAIR route): step 2/2. Functionally, catalyzes the conversion of N5-carboxyaminoimidazole ribonucleotide (N5-CAIR) to 4-carboxy-5-aminoimidazole ribonucleotide (CAIR). The sequence is that of N5-carboxyaminoimidazole ribonucleotide mutase from Thermotoga maritima (strain ATCC 43589 / DSM 3109 / JCM 10099 / NBRC 100826 / MSB8).